The following is a 245-amino-acid chain: Glutathione S-transferase F4 (245 aa).

A GST N-terminal domain is found at 25 to 106; that stretch reads AGYKVHGDPF…YIAYVHSSRG (82 aa). Residues 35 to 36, 64 to 65, 77 to 78, and 90 to 91 each bind glutathione; these read ST, HK, QV, and ES. A GST C-terminal domain is found at 114 to 244; the sequence is SHETMATLTM…QEKSWFNKPR (131 aa).

It belongs to the GST superfamily. Phi family.

Its subcellular location is the cytoplasm. The protein localises to the cytosol. The enzyme catalyses RX + glutathione = an S-substituted glutathione + a halide anion + H(+). Functionally, may be involved in the conjugation of reduced glutathione to a wide number of exogenous and endogenous hydrophobic electrophiles and have a detoxification role against certain herbicides. In Arabidopsis thaliana (Mouse-ear cress), this protein is Glutathione S-transferase F4 (GSTF4).